The chain runs to 60 residues: Cytotoxin 2 (60 aa).

4 disulfide bridges follow: C3–C21, C14–C38, C42–C53, and C54–C59.

The protein belongs to the three-finger toxin family. Short-chain subfamily. Type IA cytotoxin sub-subfamily. Monomer in solution; Homodimer and oligomer in the presence of negatively charged lipids forming a pore with a size ranging between 20 and 30 Angstroms. Expressed by the venom gland.

The protein localises to the secreted. It is found in the target cell membrane. Its function is as follows. This three-finger cytotoxin is a basic protein that interacts and penetrates into the cell membrane, with the tips of all the three loops. Cytotoxins which have a Pro-30 (P-type) interacts with membrane stronger that those which have a 'Ser-28' (S-type). CTII interacts with membrane stronger than CTI. The polypeptide is Cytotoxin 2 (Naja oxiana (Central Asian cobra)).